The sequence spans 79 residues: Small ribosomal subunit protein bS18 (79 aa).

This sequence belongs to the bacterial ribosomal protein bS18 family. As to quaternary structure, part of the 30S ribosomal subunit. Forms a tight heterodimer with protein bS6.

In terms of biological role, binds as a heterodimer with protein bS6 to the central domain of the 16S rRNA, where it helps stabilize the platform of the 30S subunit. The protein is Small ribosomal subunit protein bS18 of Bacillus pumilus (strain SAFR-032).